The sequence spans 513 residues: Zinc finger CCCH-type with G patch domain-containing protein (513 aa).

Met1 is modified (N-acetylmethionine). The interval 90 to 131 (EVPVAPGAELETVPSRETGPGPTERGQEEDDGEDEEGGAALS) is disordered. A compositionally biased stretch (acidic residues) spans 116–126 (QEEDDGEDEEG). A C3H1-type zinc finger spans residues 176 to 202 (KSLKPCSFFLEGKCRFQENCRFSHGQV). The tract at residues 267-296 (LPPLRTEPAGSSDSDGSDADDPSYARVVEP) is disordered. Phosphoserine occurs at positions 278 and 355. Residues 315–361 (TRGIGSRLLAKMGYEFGKGLGRHAEGRVEPVHAVVLPRGKSLDQCAE) enclose the G-patch domain. 2 disordered regions span residues 367–394 (TRAG…PPPR) and 492–513 (AQEA…MTEF). The span at 497-513 (LQREQRKADTHKKMTEF) shows a compositional bias: basic and acidic residues.

As to quaternary structure, interacts with CHD4/Mi-2; the interaction is direct.

Its subcellular location is the nucleus. Its function is as follows. Transcription repressor that specifically binds the 5'-GGAG[GA]A[GA]A-3' consensus sequence. Represses transcription by recruiting the chromatin multiprotein complex NuRD to target promoters. Negatively regulates expression of EGFR, a gene involved in cell proliferation, survival and migration. Its ability to repress genes of the EGFR pathway suggest it may act as a tumor suppressor. The chain is Zinc finger CCCH-type with G patch domain-containing protein (ZGPAT) from Bos taurus (Bovine).